A 331-amino-acid chain; its full sequence is Glucan endo-1,3-beta-glucosidase, acidic isoform GL161 (331 aa).

A signal peptide spans 1–9 (MCSIQIIGA). Gln10 carries the post-translational modification Pyrrolidone carboxylic acid. N-linked (GlcNAc...) asparagine glycans are attached at residues Asn55 and Asn75. The Nucleophile role is filled by Glu244.

This sequence belongs to the glycosyl hydrolase 17 family. As to expression, is expressed primarily in epidermal cell of healthy plant, and following induction by ethylene, accumulates in mesophyll cells.

The protein resides in the secreted. Its subcellular location is the extracellular space. The catalysed reaction is Hydrolysis of (1-&gt;3)-beta-D-glucosidic linkages in (1-&gt;3)-beta-D-glucans.. Is thought to be an important plant defense-related product against fungal pathogens. The polypeptide is Glucan endo-1,3-beta-glucosidase, acidic isoform GL161 (Nicotiana tabacum (Common tobacco)).